The chain runs to 569 residues: Proline--tRNA ligase (569 aa).

It belongs to the class-II aminoacyl-tRNA synthetase family. ProS type 1 subfamily. As to quaternary structure, homodimer.

The protein localises to the cytoplasm. The catalysed reaction is tRNA(Pro) + L-proline + ATP = L-prolyl-tRNA(Pro) + AMP + diphosphate. In terms of biological role, catalyzes the attachment of proline to tRNA(Pro) in a two-step reaction: proline is first activated by ATP to form Pro-AMP and then transferred to the acceptor end of tRNA(Pro). As ProRS can inadvertently accommodate and process non-cognate amino acids such as alanine and cysteine, to avoid such errors it has two additional distinct editing activities against alanine. One activity is designated as 'pretransfer' editing and involves the tRNA(Pro)-independent hydrolysis of activated Ala-AMP. The other activity is designated 'posttransfer' editing and involves deacylation of mischarged Ala-tRNA(Pro). The misacylated Cys-tRNA(Pro) is not edited by ProRS. The sequence is that of Proline--tRNA ligase from Campylobacter jejuni (strain RM1221).